Consider the following 237-residue polypeptide: Neurogenin-1 (237 aa).

The interval 35 to 83 (LQQAASASGPPAPARRGAPNISRASEVPGAQDDEQERRRRRGRTRVRSE) is disordered. The segment covering 38-53 (AASASGPPAPARRGAP) has biased composition (low complexity). The region spanning 92–144 (SRRVKANDRERNRMHNLNAALDALRSVLPSFPDDTKLTKIETLRFAYNYIWAL) is the bHLH domain. Residues 175–209 (GPPSPASDAESWGSGAAAASPLSDPSSPAASEDFT) are disordered. Residues 180 to 207 (ASDAESWGSGAAAASPLSDPSSPAASED) are compositionally biased toward low complexity.

Efficient DNA binding requires dimerization with another bHLH protein. As to expression, expression restricted to the embryonic nervous system.

It localises to the nucleus. Its function is as follows. Acts as a transcriptional regulator. Involved in the initiation of neuronal differentiation. Activates transcription by binding to the E box (5'-CANNTG-3'). Associates with chromatin to enhancer regulatory elements in genes encoding key transcriptional regulators of neurogenesis. The polypeptide is Neurogenin-1 (NEUROG1) (Homo sapiens (Human)).